Here is a 1342-residue protein sequence, read N- to C-terminus: MVYSYTEKKRIRKDFGKRPQVLDVPYLLSIQLDSFQKFIEQDPEGQNGLEAAFRSVFPIQSYSGSSELQYVSYRLGEPVFDVKECQIRGVTYSAPLRVKLRLVIYEREAPEGTVKDIKEQEVYMGEIPLMTDNGTFVINGTERVIVSQLHRSPGVFFDSDKGKTHSSGKVLYNARIIPYRGSWLDFEFDPKDNLFVRIDRRRKLPATIILRAMNYSTEEILNLFFSKTIFEIRDNRLQMTLVPERLRGETASFDIEANGKVYVEKGRRITARHIRQLEKDEVNRIEVPVEYIAGKVVARDYIDVNTGEIICAANMELSLDLLARLSQSGHKSIETLFTNDLDHGAYISETLRVDPTNDRLSALVEIYRMMRPGEPPTREAAENLFENLFFSEDRYDLSAVGRMKFNRSLSREEVEGSGILSKDDIIDVMKKLIDIRNGKGEVDDIDHLGNRRIRSVGEMAENQFRVGLVRVERAVKERLSLGDLDTLMPQDMINAKPISAAVKEFFGSSQLSQFMDQNNPLSEITHKRRISALGPGGLTRERAGFEVRDVHPTHYGRVCPIETPEGPNIGLINSLSVYAQTNEYGFLETPYRLVRDGVVTDEIHYLSAIEEGNFVIAQANTVLDDEGHFVEDLITCRNYGESSLFNREQVEYMDVSTQQVVSVGASLIPFLEHDDANRALMGANMQRQAVPTLRADKPLVGTGMERAVAVDSGVTSVAKRGGVVQYVDASRIVIKVNEDEMYPGEAGIDIYNLTKYTRSNQNTCINQMPCVSLGEPVERGDVLADGPSTDLGELALGQNMRVAFMPWNGYNFEDSILVSERVVQEDRFTTIHIQELACVSRDTKLGPEEITADIPNVGEAALSKLDESGIVYIGAEVTGGDILVGKVTPKGETQLTPEEKLLRAIFGEKASDVKDSSLRVPNGVSGTVIDVQVFTRDGVEKDKRALEIEEMQLRQAKKDLTEELQIFEAGLFARIRSVLIAGGIEAEKLDKLPRERWLELGLADEEKQNQLEQLAEQYDELKAEFEKKLDAKRRKITQGDDLAPGVLKIVKVYLAVKRQIQPGDKMAGRHGNKGVISKINPIEDMPYDENGTPVDIVLNPLGVPSRMNIGQILETHLGMAAKGIGDKINAMLKQQQEVAKLREFIQKAYNLGDETRQKVDLSTFSDEEVMRLAENLKKGMPIATPVFDGAKEKEIKELLKLGDLPTSGQITLFDGRTGEQFERQVTVGYMYMLKLNHLVDDKMHARSTGSYSLVTQQPLGGKAQFGGQRFGEMEVWALEAYGAAYTLQEMLTVKSDDVNGRTKMYKNIVDGNHQMEPGMPESFNVLLKEIRSLGINIELEGE.

The protein belongs to the RNA polymerase beta chain family. The RNAP catalytic core consists of 2 alpha, 1 beta, 1 beta' and 1 omega subunit. When a sigma factor is associated with the core the holoenzyme is formed, which can initiate transcription.

It catalyses the reaction RNA(n) + a ribonucleoside 5'-triphosphate = RNA(n+1) + diphosphate. Functionally, DNA-dependent RNA polymerase catalyzes the transcription of DNA into RNA using the four ribonucleoside triphosphates as substrates. In Photorhabdus laumondii subsp. laumondii (strain DSM 15139 / CIP 105565 / TT01) (Photorhabdus luminescens subsp. laumondii), this protein is DNA-directed RNA polymerase subunit beta.